Reading from the N-terminus, the 103-residue chain is Matrix Gla protein (103 aa).

The first 19 residues, 1 to 19 (MKSLLLLSILAALAVAALC), serve as a signal peptide directing secretion. The residue at position 21 (Glu-21) is a 4-carboxyglutamate; partial. Residues Ser-22, Ser-25, and Ser-28 each carry the phosphoserine modification. In terms of domain architecture, Gla spans 51 to 97 (RAKAQERIRELNKPQYELNREACDDFKLCERYAMVYGYNAAYDRYFR). 4-carboxyglutamate occurs at positions 56, 60, 67, and 71. A disulfide bridge connects residues Cys-73 and Cys-79. A propeptide spans 99-102 (RRGA) (removed in short form; probably by carboxypeptidase N). Position 103 (Lys-103) is a propeptide, removed in long form; probably by carboxypeptidase H.

Belongs to the osteocalcin/matrix Gla protein family. Post-translationally, requires vitamin K-dependent gamma-carboxylation for its function.

The protein resides in the secreted. Functionally, associates with the organic matrix of bone and cartilage. Thought to act as an inhibitor of bone formation. This chain is Matrix Gla protein (MGP), found in Bos taurus (Bovine).